Consider the following 164-residue polypeptide: Glutamate uptake regulatory protein (164 aa).

The region spanning Leu-5–Gly-66 is the HTH asnC-type domain. Residues Met-24–Arg-43 constitute a DNA-binding region (H-T-H motif).

In terms of biological role, represses the secondary, H(+)-coupled glutamate uptake system (Gluemp) genes. The sequence is that of Glutamate uptake regulatory protein (grp) from Zymomonas mobilis subsp. mobilis (strain ATCC 31821 / ZM4 / CP4).